We begin with the raw amino-acid sequence, 313 residues long: Dehydrogenase/reductase SDR family member 1 (313 aa).

Position 19 (isoleucine 19) interacts with NAD(+). Arginine 21 carries the post-translational modification Omega-N-methylarginine. Aspartate 64 contacts NAD(+). Serine 151 serves as a coordination point for substrate. Positions 163, 167, and 198 each coordinate NAD(+). The active-site Proton acceptor is the tyrosine 163.

This sequence belongs to the short-chain dehydrogenases/reductases (SDR) family.

The protein resides in the endoplasmic reticulum. It catalyses the reaction 17alpha-estradiol + NADP(+) = estrone + NADPH + H(+). The enzyme catalyses testosterone + NADP(+) = androst-4-ene-3,17-dione + NADPH + H(+). The catalysed reaction is prostaglandin E1 + NADPH + H(+) = prostaglandin F1 + NADP(+). It carries out the reaction isatin + NADPH + H(+) = 3-hydroxyindolin-2-one + NADP(+). Functionally, NADPH-dependent oxidoreductase which catalyzes the reduction of some steroids (estrone, androstene-3,17-dione and cortisone) as well as prostaglandin E1, isatin and xenobiotics in vitro. May have a role in steroid and/or xenobiotic metabolism. The protein is Dehydrogenase/reductase SDR family member 1 of Mus musculus (Mouse).